The chain runs to 327 residues: DNA-directed RNA polymerase subunit alpha (327 aa).

Residues 1–233 (MVREKVKVST…NLFIPFLHVE (233 aa)) are alpha N-terminal domain (alpha-NTD). Positions 267-327 (LAFQYIFIDQ…KKILDILEKK (61 aa)) are alpha C-terminal domain (alpha-CTD).

It belongs to the RNA polymerase alpha chain family. In terms of assembly, in plastids the minimal PEP RNA polymerase catalytic core is composed of four subunits: alpha, beta, beta', and beta''. When a (nuclear-encoded) sigma factor is associated with the core the holoenzyme is formed, which can initiate transcription.

Its subcellular location is the plastid. The protein resides in the chloroplast. It catalyses the reaction RNA(n) + a ribonucleoside 5'-triphosphate = RNA(n+1) + diphosphate. DNA-dependent RNA polymerase catalyzes the transcription of DNA into RNA using the four ribonucleoside triphosphates as substrates. The protein is DNA-directed RNA polymerase subunit alpha of Lepidium virginicum (Virginia pepperweed).